Here is a 236-residue protein sequence, read N- to C-terminus: Small ribosomal subunit protein uS10m (236 aa).

The N-terminal 24 residues, 1 to 24, are a transit peptide targeting the mitochondrion; it reads MMRQSIRPLRAFSSEVSWIARRTQ. Residues 29–49 are disordered; that stretch reads KPGDLVPNKPEPSKNEQEPRF. Over residues 39–49 the composition is skewed to basic and acidic residues; it reads EPSKNEQEPRF.

This sequence belongs to the universal ribosomal protein uS10 family. Part of the mitochondrial small ribosomal subunit.

It localises to the mitochondrion. Functionally, involved in mitochondrial genome encoded proteins translation. Involved in the binding of tRNA to the ribosomes. In Gibberella zeae (strain ATCC MYA-4620 / CBS 123657 / FGSC 9075 / NRRL 31084 / PH-1) (Wheat head blight fungus), this protein is Small ribosomal subunit protein uS10m (RSM10).